Consider the following 124-residue polypeptide: Large ribosomal subunit protein bL20c (124 aa).

It belongs to the bacterial ribosomal protein bL20 family.

It is found in the plastid. It localises to the chloroplast. Its function is as follows. Binds directly to 23S ribosomal RNA and is necessary for the in vitro assembly process of the 50S ribosomal subunit. It is not involved in the protein synthesizing functions of that subunit. The polypeptide is Large ribosomal subunit protein bL20c (rpl20) (Euglena gracilis).